Reading from the N-terminus, the 642-residue chain is Poly(A) RNA polymerase protein 1 (642 aa).

Disordered stretches follow at residues 1-29 and 84-104; these read MTRLKAKYSPTKGKRKEDKHTKRMRKSSF and TSSEDEQRAESSKRNNSLEDN. The segment covering 88-100 has biased composition (basic and acidic residues); the sequence is DEQRAESSKRNNS. Mg(2+)-binding residues include Asp-233 and Asp-235. ATP is bound by residues Gly-298, Lys-323, Asn-428, and Arg-432. The PAP-associated domain occupies 368–428; it reads NLGVLLIDFF…AIQDPGDPNN (61 aa). The disordered stretch occupies residues 535–642; that stretch reads AKKKQKAKKD…DYWLSKGQAL (108 aa). The segment covering 578–588 has biased composition (polar residues); sequence QGSLLHQNNLS. 2 positions are modified to phosphoserine: Ser-596 and Ser-602. A compositionally biased stretch (basic and acidic residues) spans 604-635; that stretch reads QDQKGRDTPSGQDEKSPLETKTVDAQTRRDYW.

It belongs to the DNA polymerase type-B-like family. In terms of assembly, component of the TRAMP5 complex composed of at least AIR1, MTR4 and TFR5. Interacts with POL2, DPB2 and DPB11. Mg(2+) serves as cofactor. Mn(2+) is required as a cofactor.

Its subcellular location is the nucleus. The protein localises to the nucleolus. The enzyme catalyses RNA(n) + ATP = RNA(n)-3'-adenine ribonucleotide + diphosphate. In terms of biological role, catalytic subunit of the TRAMP5 complex which has a poly(A) RNA polymerase activity and is involved in a post-transcriptional quality control mechanism limiting inappropriate expression of genetic information. Polyadenylation is required for the degradative activity of the exosome on several of its nuclear RNA substrates like cryptic transcripts generated by RNA polymerase II and III, or hypomethylated pre-tRNAi-Met. Polyadenylates RNA processing and degradation intermediates of snRNAs, snoRNAs and mRNAs that accumulate in strains lacking a functional exosome. TRF5 is also required for proper nuclear division in mitosis and sister chromatid cohesion. Involved in the regulation of histone mRNA levels. May mediate mitotic chromosome condensation. This Saccharomyces cerevisiae (strain ATCC 204508 / S288c) (Baker's yeast) protein is Poly(A) RNA polymerase protein 1 (TRF5).